Consider the following 424-residue polypeptide: GTPase Obg (424 aa).

Residues 1–158 (MFYDQAKIYV…RNLLLELKLL (158 aa)) enclose the Obg domain. An OBG-type G domain is found at 159–329 (ADVGLVGFPN…LVYAAAKALP (171 aa)). Residues 165 to 172 (GFPNVGKS), 190 to 194 (FTTLV), 212 to 215 (DIPG), 282 to 285 (NKMD), and 310 to 312 (SAA) each bind GTP. Residues serine 172 and threonine 192 each contribute to the Mg(2+) site. In terms of domain architecture, OCT spans 347 to 424 (TQASAPHRFE…IAGIEFEWEE (78 aa)).

The protein belongs to the TRAFAC class OBG-HflX-like GTPase superfamily. OBG GTPase family. Monomer. It depends on Mg(2+) as a cofactor.

It localises to the cytoplasm. In terms of biological role, an essential GTPase which binds GTP, GDP and possibly (p)ppGpp with moderate affinity, with high nucleotide exchange rates and a fairly low GTP hydrolysis rate. Plays a role in control of the cell cycle, stress response, ribosome biogenesis and in those bacteria that undergo differentiation, in morphogenesis control. The protein is GTPase Obg of Desulfitobacterium hafniense (strain DSM 10664 / DCB-2).